Reading from the N-terminus, the 938-residue chain is MDCTNLQFESILNLLKTDVSDNTFLTITAKIEIFSLAAESITADKILSFAKLLPIHNYHFNFIKNHMVFYILNYSTLGFAKRFSIAETLCRELKIFHRTFQSTSKLQNLNNAEVLYQFEKLIESIQVFKAELASPIGKLLRQETMIYDKPTEKSVKYVIIQQNLIKINNLIQDCESIKNCRLIAELIDELYQKVYRWFMQIFTYDDIIFPNDNFLDRLLKMDFCYTYYTASNQHLLSLFEQTIDNQIFIDPSPYFEINPVYSPELQFMSTFSLKIFSKNISAKNEDLYIYPLLKTNFSILTFLSLENIFFHHGFIYHILHRTNITPTEEKKLGKINGFLNTVIQQVLIKKNNLQITFPELLDKIYHLHRIGLNIETAQIFLQMLTTYKPATTNNKLQTFFTNFSIIIFSAYIFFLCIELFSPTFIFHNKKKLILEKQKSIILILGEQFSFIWKEVNEIVDLLFSSTVTETYFKFYSKGADDYEKDFLYKDLMEKWGELFFPLTYSMTTPQKYTDKHVSSTVLKNLCDTAYQSKMETAYESLLPYITHPEFKFIFITHYVRPSLSLITNLTFEEIKDNRRLLILIFACKLLMPSNYLLSHYLLLLHAFTLQIFKVDLGHFSIIHAITQKIFDNINSLTQTIFIPKTNFLVSLLLTAYTVHMQTYVNPWIQKTISENIALLKEYIDFTKKCSSTLATTCYLNLENFAVNMYFGKNKVGSTSLSAFYRTCSKLIEESKLFKDRLQEIKVSKTLFIEMLQNVVKNITKFKDLVSNQTLQNFIIIVERISSHANTTYQDVLNSIDECHFSNMQLIQSFKNIVYVIDVLNTKNIFNFSLASQLIEAKKLVKKQDTYNQLNVQDDFVTVLKSHLNNLFEKQKPTINIERRFMLEGIPDIKQIPFLDVFDERYRLIPQIEKYLHWYIAYSEAAQADLVEPLLLKLG.

An interaction with large tegument protein region spans residues 457 to 938; sequence EIVDLLFSST…LVEPLLLKLG (482 aa).

Belongs to the herpesviridae inner tegument protein family. In terms of assembly, interacts (via C-terminus) with the large tegument protein/LTP (via N-terminus).

The protein resides in the virion tegument. It is found in the host cytoplasm. The protein localises to the host nucleus. It localises to the host Golgi apparatus. Its subcellular location is the host trans-Golgi network. Its function is as follows. Plays an essential role in cytoplasmic secondary envelopment during viral egress. Interacts with the capsid via the large tegument protein/LTP and participates in its transport to the host trans-Golgi network (TGN) where secondary envelopment occurs. Modulates tegumentation and capsid accumulation at the viral assembly complex. The protein is Inner tegument protein (U30) of Human herpesvirus 7 (strain JI) (HHV-7).